The primary structure comprises 546 residues: Chaperonin GroEL 4 (546 aa).

ATP is bound by residues threonine 30–proline 33, lysine 51, aspartate 87–threonine 91, glycine 415, and aspartate 495. Residues alanine 524–phenylalanine 546 form a disordered region. A compositionally biased stretch (gly residues) spans glutamine 533 to phenylalanine 546.

It belongs to the chaperonin (HSP60) family. As to quaternary structure, forms a cylinder of 14 subunits composed of two heptameric rings stacked back-to-back. Interacts with the co-chaperonin GroES.

It is found in the cytoplasm. It carries out the reaction ATP + H2O + a folded polypeptide = ADP + phosphate + an unfolded polypeptide.. Its function is as follows. Together with its co-chaperonin GroES, plays an essential role in assisting protein folding. The GroEL-GroES system forms a nano-cage that allows encapsulation of the non-native substrate proteins and provides a physical environment optimized to promote and accelerate protein folding. This Paraburkholderia xenovorans (strain LB400) protein is Chaperonin GroEL 4.